The primary structure comprises 240 residues: Histidinol dehydrogenase homolog oryD (240 aa).

Zn(2+)-binding residues include Q64 and H67. Residue E134 is the Proton acceptor of the active site. Zn(2+)-binding residues include D168 and H228.

The protein belongs to the histidinol dehydrogenase family. It depends on Zn(2+) as a cofactor.

Its pathway is secondary metabolite biosynthesis. Histidinol dehydrogenase homolog; part of the gene cluster that mediates the biosynthesis of oryzines, natural products with an unusual maleidride backbone. The two subunits of the fungal fatty acid synthase oryfasA and oryfasB probably form octenoic acid. This fatty acid is most likely activated by the acyl-CoA ligase oryP to give octenyl-CoA before the citrate synthase-like protein oryE catalyzes condensation with oxaloacetate to form tricarboxylic acid. The next steps of the pathways are conjectural, but a favorite possible route has been proposed, beginning with decarboxylation and concomitant dehydration by the decarboxylase oryM, followed by tautomerization, which may lead to the production of a diene intermediate. Reduction of this diene intermediate could give the known metabolite piliformic acid. On the pathway to oryzine B and oryzine A, however, hydroxylation of the diene by the alpha-ketoglutarate-dependent dioxygenase oryG and lactonisation by the lactonohydrolases oryH or oryL could give oryzine B directly. Finally, enoyl reduction by the dehydrogenase oryD would then convert oryzine B into oryzine A. In Aspergillus oryzae (strain ATCC 42149 / RIB 40) (Yellow koji mold), this protein is Histidinol dehydrogenase homolog oryD.